A 521-amino-acid chain; its full sequence is Cysteine protease atg-4.2 (521 aa).

The span at methionine 90–serine 100 shows a compositional bias: low complexity. Residues methionine 90–isoleucine 109 form a disordered region. The active-site Nucleophile is cysteine 203. Catalysis depends on residues aspartate 394 and histidine 396. Residues proline 499–leucine 521 form a disordered region.

Belongs to the peptidase C54 family.

The protein resides in the cytoplasm. The enzyme catalyses [protein]-C-terminal L-amino acid-glycyl-phosphatidylethanolamide + H2O = [protein]-C-terminal L-amino acid-glycine + a 1,2-diacyl-sn-glycero-3-phosphoethanolamine. In terms of biological role, cysteine protease required for autophagy. Cleaves the C-terminal amino acid of ATG8 family proteins lgg-1, to reveal a C-terminal glycine. Exposure of the glycine at the C-terminus is essential for ATG8 proteins conjugation to phosphatidylethanolamine (PE) and insertion to membranes, which is necessary for autophagy. Its cleavage activity is functionally redundant to atg-4.1, but it cleaves lgg-1 precursors less efficiently than atg-4.1. In contrast to atg-4.1, plays a more significant role in the later phases of autophagy and in addition has a role in autophagosome maturation. Acts redundantly with atg-4.1 to promote the lgg-1 delipidation to release the protein from membranes, which facilitates multiple events during macroautophagy. Regulates the accumulation of autophagic structures in neurons and is specifically, required for the maturation and elimination of autophagosomes from the synaptic region of AIY interneurons. The protein is Cysteine protease atg-4.2 of Caenorhabditis elegans.